The sequence spans 283 residues: uncharacterized protein (283 aa).

Asp-121 is a catalytic residue.

This sequence belongs to the pseudouridine synthase RluA family.

The enzyme catalyses a uridine in RNA = a pseudouridine in RNA. This is an uncharacterized protein from Bacillus subtilis (strain 168).